We begin with the raw amino-acid sequence, 177 residues long: 3-hydroxydecanoyl-[acyl-carrier-protein] dehydratase (177 aa).

His76 is an active-site residue.

It belongs to the thioester dehydratase family. FabA subfamily. In terms of assembly, homodimer.

Its subcellular location is the cytoplasm. It catalyses the reaction a (3R)-hydroxyacyl-[ACP] = a (2E)-enoyl-[ACP] + H2O. It carries out the reaction (3R)-hydroxydecanoyl-[ACP] = (2E)-decenoyl-[ACP] + H2O. The enzyme catalyses (2E)-decenoyl-[ACP] = (3Z)-decenoyl-[ACP]. It functions in the pathway lipid metabolism; fatty acid biosynthesis. In terms of biological role, necessary for the introduction of cis unsaturation into fatty acids. Catalyzes the dehydration of (3R)-3-hydroxydecanoyl-ACP to E-(2)-decenoyl-ACP and then its isomerization to Z-(3)-decenoyl-ACP. Can catalyze the dehydratase reaction for beta-hydroxyacyl-ACPs with saturated chain lengths up to 16:0, being most active on intermediate chain length. The polypeptide is 3-hydroxydecanoyl-[acyl-carrier-protein] dehydratase (Actinobacillus succinogenes (strain ATCC 55618 / DSM 22257 / CCUG 43843 / 130Z)).